We begin with the raw amino-acid sequence, 389 residues long: Chorismate synthase (389 aa).

NADP(+) contacts are provided by R41 and R47. FMN is bound by residues 129-131 (RSS), 247-248 (NA), G291, 306-310 (KPIST), and R332.

The protein belongs to the chorismate synthase family. As to quaternary structure, homotetramer. The cofactor is FMNH2.

It carries out the reaction 5-O-(1-carboxyvinyl)-3-phosphoshikimate = chorismate + phosphate. The protein operates within metabolic intermediate biosynthesis; chorismate biosynthesis; chorismate from D-erythrose 4-phosphate and phosphoenolpyruvate: step 7/7. Catalyzes the anti-1,4-elimination of the C-3 phosphate and the C-6 proR hydrogen from 5-enolpyruvylshikimate-3-phosphate (EPSP) to yield chorismate, which is the branch point compound that serves as the starting substrate for the three terminal pathways of aromatic amino acid biosynthesis. This reaction introduces a second double bond into the aromatic ring system. In Rubrobacter xylanophilus (strain DSM 9941 / JCM 11954 / NBRC 16129 / PRD-1), this protein is Chorismate synthase.